The following is a 428-amino-acid chain: MKLIKYPDRSQWNEILKRPVLETENLFDTVRNIINRVRAGGDRVVMEYEAVFDKAELTSLAVTSAEIEEAEKEVPIELKAAIYLAKRNIETFHSAQRFEGKKVDTMEGVTCWQKAVAIEKVGLYIPGGTAPLFSTVLMLAIPAKIAGCKEIVLCTPPDKNGKVHPAILFAARLAGVSKIFKAGGVQAIAAMAYGTESIPKVYKIFGPGNQYVTAAKQLVSLRDVAIDMPAGPSEVEVLADESANPVFVAADLLSQAEHGVDSQAMLVTTSEKLQTEVVYEVERQLGYLTRRDIAEKSLASSKLILVKDMEEALELTNAYAPEHLIIETKDYMEVAGQIVNAGSVFLGAFSPESAGDYASGTNHTLPTNGYAKAYSGVSLDSFIRKITFQEILPSGMSAIGPAIEVMAANEHLDAHKNAVTVRLEEIRK.

NAD(+) contacts are provided by Tyr124, Gln186, and Asn209. Substrate contacts are provided by Ser233, Gln255, and His258. Positions 255 and 258 each coordinate Zn(2+). Residues Glu322 and His323 each act as proton acceptor in the active site. Substrate is bound by residues His323, Asp356, Glu410, and His415. A Zn(2+)-binding site is contributed by Asp356. His415 is a Zn(2+) binding site.

It belongs to the histidinol dehydrogenase family. It depends on Zn(2+) as a cofactor.

It carries out the reaction L-histidinol + 2 NAD(+) + H2O = L-histidine + 2 NADH + 3 H(+). The protein operates within amino-acid biosynthesis; L-histidine biosynthesis; L-histidine from 5-phospho-alpha-D-ribose 1-diphosphate: step 9/9. Its function is as follows. Catalyzes the sequential NAD-dependent oxidations of L-histidinol to L-histidinaldehyde and then to L-histidine. The sequence is that of Histidinol dehydrogenase from Bacteroides fragilis (strain ATCC 25285 / DSM 2151 / CCUG 4856 / JCM 11019 / LMG 10263 / NCTC 9343 / Onslow / VPI 2553 / EN-2).